We begin with the raw amino-acid sequence, 265 residues long: Lysosomal membrane ascorbate-dependent ferrireductase CYB561A3 (265 aa).

Over 1–2 (MA) the chain is Cytoplasmic. The helical transmembrane segment at 3–23 (VGWFYLSVLALCSLGSMCILF) threads the bilayer. The Cytochrome b561 domain maps to 12–219 (ALCSLGSMCI…FGLLVLYILL (208 aa)). Topologically, residues 24–45 (TIYWMRYWHGGFAWDGSMLMFN) are lumenal. A helical membrane pass occupies residues 46 to 66 (WHPVLMVTGMVVLYSAASLVY). Residues H47 and R67 each coordinate heme b. At 67 to 83 (RLPQSWVGPRLPWKSGH) the chain is on the cytoplasmic side. Residues R76 and K80 each coordinate L-ascorbate. H83 contacts heme b. The helical transmembrane segment at 84–104 (AAMHLLAFLLTVLGLHAVFEF) threads the bilayer. The Lumenal segment spans residues 105 to 119 (HNHAKIPHLYSLHSW). Heme b is bound by residues 112 to 115 (HLYS) and H117. A helical membrane pass occupies residues 120–140 (LGITTVFLFACQWFLGFSVFL). Residues 141 to 154 (LPWASMWLRSLLKP) lie on the Cytoplasmic side of the membrane. R149 lines the L-ascorbate pocket. The helical transmembrane segment at 155-175 (IHVFFGASILSLAIASVVSGI) threads the bilayer. H156 and E177 together coordinate heme b. Over 176–197 (NEKLFFSLKNGTKTYSNLPSEA) the chain is Lumenal. N-linked (GlcNAc...) asparagine glycosylation occurs at N185. A helical membrane pass occupies residues 198–218 (VFANCAGMLVVVFGLLVLYIL). Residues 219 to 265 (LASSWKRPEPGMQAEREPTRTRGRAGTPEVMLEGERGLAEPLLQKRS) are Cytoplasmic-facing. A heme b-binding site is contributed by K224. A compositionally biased stretch (basic and acidic residues) spans 228–238 (PGMQAEREPTR). The tract at residues 228–265 (PGMQAEREPTRTRGRAGTPEVMLEGERGLAEPLLQKRS) is disordered.

As to quaternary structure, homodimer. Heme b is required as a cofactor. Post-translationally, N-glycosylated.

The protein resides in the late endosome membrane. It is found in the lysosome membrane. The catalysed reaction is Fe(3+)(out) + L-ascorbate(in) = monodehydro-L-ascorbate radical(in) + Fe(2+)(out) + H(+). In terms of biological role, transmembrane reductase that uses ascorbate as an electron donor in the cytoplasm and transfers electrons across membranes to reduce iron cations Fe(3+) into Fe(2+) in the lumen of the late endosome and lysosome. Reduced iron can then be extruded from the late endosome and lysosome to the cytoplasm by divalent metal-specific transporters. It is therefore most probably involved in endosomal and lysosomal cellular iron homeostasis. The sequence is that of Lysosomal membrane ascorbate-dependent ferrireductase CYB561A3 from Bos taurus (Bovine).